The chain runs to 434 residues: Trigger factor (434 aa).

The PPIase FKBP-type domain occupies 161–246 (EDRVVIDFTG…VKQVQAPVLP (86 aa)).

The protein belongs to the FKBP-type PPIase family. Tig subfamily.

The protein localises to the cytoplasm. The enzyme catalyses [protein]-peptidylproline (omega=180) = [protein]-peptidylproline (omega=0). Its function is as follows. Involved in protein export. Acts as a chaperone by maintaining the newly synthesized protein in an open conformation. Functions as a peptidyl-prolyl cis-trans isomerase. This chain is Trigger factor, found in Dechloromonas aromatica (strain RCB).